The following is a 323-amino-acid chain: Global nitrogen regulator NrpRI (323 aa).

Residues 11–76 (IEIMRVIHES…TLTDLGENEM (66 aa)) are winged helix-turn-helix. Residues 86–323 (GFVISRIEEM…MLDYQTMKEI (238 aa)) are NRD.

This sequence belongs to the NrpR family. In terms of assembly, forms a complex with NrpRII and the general archaeal transcription factors TBP and TFB. Interacts directly with NrpRII.

With respect to regulation, under nitrogen limitation, binding of 2-oxoglutarate to the NrpRI/NrpRII complex decreases the binding affinity of NrpRI to DNA as well as the binding affinity of NrpRII to TBP and TFB, which leads to removal of the complex from the operator, RNA polymerase recruitment and initiation of transcription. Plays a major role in nitrogen regulation. Under nitrogen sufficiency, binds to the nifH and the glnk1 promoters, leading to repression of the transcription of the genes. The chain is Global nitrogen regulator NrpRI from Methanosarcina mazei (strain ATCC BAA-159 / DSM 3647 / Goe1 / Go1 / JCM 11833 / OCM 88) (Methanosarcina frisia).